Reading from the N-terminus, the 230-residue chain is Large ribosomal subunit protein uL1c (230 aa).

It belongs to the universal ribosomal protein uL1 family. As to quaternary structure, part of the 50S ribosomal subunit.

The protein resides in the plastid. The protein localises to the chloroplast. Functionally, binds directly to 23S rRNA. Might be involved in E site tRNA release (Potential). This is Large ribosomal subunit protein uL1c (rpl1) from Phaeodactylum tricornutum (strain CCAP 1055/1).